A 149-amino-acid chain; its full sequence is NPC intracellular cholesterol transporter 2 (149 aa).

The N-terminal stretch at 1 to 19 (MRFLTVAFLFLALSASALA) is a signal peptide. 3 disulfides stabilise this stretch: Cys27–Cys140, Cys42–Cys47, and Cys93–Cys99. Asn58 carries an N-linked (GlcNAc...) asparagine glycan. Lys116 is modified (N6-acetyllysine).

Belongs to the NPC2 family. Interacts with NPC1 (via the second lumenal domain) in a cholestrol-dependent manner. Interacts with NUS1/NgBR, the interaction stabilizes NCP2 and regulates cholesterol trafficking. Interacts with DHDDS. Interacts with NEDD4L (via C2 domain). Interacts with NPC1L1. Expressed in kidney, spleen, liver and mammary gland, but not in testis.

It is found in the secreted. Its subcellular location is the endoplasmic reticulum. It localises to the lysosome. It carries out the reaction cholesterol(in) = cholesterol(out). In terms of biological role, intracellular cholesterol transporter which acts in concert with NPC1 and plays an important role in the egress of cholesterol from the lysosomal compartment. Unesterified cholesterol that has been released from LDLs in the lumen of the late endosomes/lysosomes is transferred by NPC2 to the cholesterol-binding pocket in the N-terminal domain of NPC1. May bind and mobilize cholesterol that is associated with membranes. NPC2 binds cholesterol with a 1:1 stoichiometry. Can bind a variety of sterols, including lathosterol, desmosterol and the plant sterols stigmasterol and beta-sitosterol. The secreted form of NCP2 regulates biliary cholesterol secretion via stimulation of ABCG5/ABCG8-mediated cholesterol transport. This chain is NPC intracellular cholesterol transporter 2, found in Bos taurus (Bovine).